The sequence spans 367 residues: Alanine racemase (367 aa).

Residue K34 is the Proton acceptor; specific for D-alanine of the active site. K34 bears the N6-(pyridoxal phosphate)lysine mark. Residue R131 coordinates substrate. Y258 functions as the Proton acceptor; specific for L-alanine in the catalytic mechanism. Residue M306 participates in substrate binding.

It belongs to the alanine racemase family. Pyridoxal 5'-phosphate serves as cofactor.

It catalyses the reaction L-alanine = D-alanine. Its pathway is amino-acid biosynthesis; D-alanine biosynthesis; D-alanine from L-alanine: step 1/1. Functionally, catalyzes the interconversion of L-alanine and D-alanine. May also act on other amino acids. The chain is Alanine racemase (alr) from Corynebacterium efficiens (strain DSM 44549 / YS-314 / AJ 12310 / JCM 11189 / NBRC 100395).